Here is a 161-residue protein sequence, read N- to C-terminus: Globin CTT-VIIB-3 (161 aa).

The first 16 residues, 1 to 16 (MKFFAVLALCIVGAIA), serve as a signal peptide directing secretion. One can recognise a Globin domain in the interval 18-161 (PLTADEASLV…NTYAIVVPRL (144 aa)). Heme b-binding residues include H76 and H111.

It belongs to the globin family. In terms of assembly, homodimer.

The protein is Globin CTT-VIIB-3 (CTT-7B3) of Chironomus thummi thummi (Midge).